We begin with the raw amino-acid sequence, 554 residues long: Urocanate hydratase (554 aa).

NAD(+) is bound by residues 51–52 (GG), Gln129, 175–177 (GMG), Glu195, 241–242 (NA), 262–266 (QTSAH), 272–273 (YL), and Tyr321. Residue Cys409 is part of the active site. NAD(+) is bound at residue Gly491.

The protein belongs to the urocanase family. It depends on NAD(+) as a cofactor.

The protein localises to the cytoplasm. It carries out the reaction 4-imidazolone-5-propanoate = trans-urocanate + H2O. It functions in the pathway amino-acid degradation; L-histidine degradation into L-glutamate; N-formimidoyl-L-glutamate from L-histidine: step 2/3. Functionally, catalyzes the conversion of urocanate to 4-imidazolone-5-propionate. The protein is Urocanate hydratase of Caulobacter vibrioides (strain ATCC 19089 / CIP 103742 / CB 15) (Caulobacter crescentus).